The following is a 54-amino-acid chain: Ovomucoid (54 aa).

One can recognise a Kazal-like domain in the interval valine 4 to cysteine 54. 3 disulfides stabilise this stretch: cysteine 6-cysteine 36, cysteine 14-cysteine 33, and cysteine 22-cysteine 54. The N-linked (GlcNAc...) asparagine glycan is linked to asparagine 43.

It localises to the secreted. The polypeptide is Ovomucoid (Pavo muticus (Green peafowl)).